The chain runs to 421 residues: MTKDIAQVMAEVGRKAKAAAAPLSIATSEQKNKALNAAADAILEARADILEANRLDLANAEKNGMAASFVDRLTLNEARIDAIAEDIRAIATLPDPVGEVIAEWDRPNGLHIERVRTPLGVIGVIYESRPNVTADAGALCLKAGNAVILRGGSDSAHSSAAIHKALVKGLEAANLPADAIQIVPVTDRAAVGEMLKGLGGAIDVIVPRGGKSLVARVQSEARVPVFAHLEGICHLYIDKSADLDMARRIALDAKMRRTGICGAAETLLVDRAVASTHLAPILGDLAAGGCEIRGSAEVLALYPAAKPATEEDWSTEYLDAIISVALVDGISGAIDHINRYSSHHTEAIVAEDAQTVARFFNEIDSAILLHNASTQFADGGEFGMGAEIGIATGKMHARGPVGVEQLTSFKYRVRGSGQVRG.

Belongs to the gamma-glutamyl phosphate reductase family.

Its subcellular location is the cytoplasm. The catalysed reaction is L-glutamate 5-semialdehyde + phosphate + NADP(+) = L-glutamyl 5-phosphate + NADPH + H(+). It functions in the pathway amino-acid biosynthesis; L-proline biosynthesis; L-glutamate 5-semialdehyde from L-glutamate: step 2/2. In terms of biological role, catalyzes the NADPH-dependent reduction of L-glutamate 5-phosphate into L-glutamate 5-semialdehyde and phosphate. The product spontaneously undergoes cyclization to form 1-pyrroline-5-carboxylate. The chain is Gamma-glutamyl phosphate reductase from Brucella suis biovar 1 (strain 1330).